A 371-amino-acid polypeptide reads, in one-letter code: Glycosyltransferase 8 domain-containing protein 1 (371 aa).

Residues 1 to 5 (MSFRK) lie on the Cytoplasmic side of the membrane. The helical; Signal-anchor for type II membrane protein transmembrane segment at 6-26 (VTIIIWALAVILFLLALHHNF) threads the bilayer. Topologically, residues 27–371 (LSLSSLLRND…RRHMDTSNIK (345 aa)) are lumenal. N257 carries an N-linked (GlcNAc...) asparagine glycan.

Belongs to the glycosyltransferase 8 family.

It is found in the membrane. The protein is Glycosyltransferase 8 domain-containing protein 1 (Glt8d1) of Rattus norvegicus (Rat).